Reading from the N-terminus, the 198-residue chain is Probable chorismate pyruvate-lyase (198 aa).

Positions 73, 111, and 172 each coordinate substrate.

This sequence belongs to the UbiC family.

Its subcellular location is the cytoplasm. The catalysed reaction is chorismate = 4-hydroxybenzoate + pyruvate. It functions in the pathway cofactor biosynthesis; ubiquinone biosynthesis. In terms of biological role, removes the pyruvyl group from chorismate, with concomitant aromatization of the ring, to provide 4-hydroxybenzoate (4HB) for the ubiquinone pathway. In Burkholderia orbicola (strain AU 1054), this protein is Probable chorismate pyruvate-lyase.